The chain runs to 313 residues: MNTFSQVWVFSDTPSRLPELMNGAQALANQINTFVLNDADGAQAIQLGANHVWKLNGKPDDRMIEDYAGVMADTIRQHGADGLVLLPNTRRGKLLAAKLGYRLKVAVSNDASTVSVQDGKATVKHMVYGGLAIGEERIATPYAVLTISSGTFDAAQPDASRTGETHTVEWQAPAVAITRTATQARQSNSVDLDKARLVVSVGRGIGSKENIALAEQLCKAIGAELACSRPVAENEKWMEHERYVGISNLMLKPELYLAVGISGQIQHMVGANASQTIFAINKDKNAPIFQYADYGIVGDAVKILPALIAALAR.

FAD is bound at residue 255–283 (LYLAVGISGQIQHMVGANASQTIFAINKD).

Belongs to the ETF alpha-subunit/FixB family. As to quaternary structure, heterodimer of FixA and FixB.

It functions in the pathway amine and polyamine metabolism; carnitine metabolism. Functionally, required for anaerobic carnitine reduction. May bring reductant to CaiA. The polypeptide is Protein FixB (Escherichia coli O139:H28 (strain E24377A / ETEC)).